A 191-amino-acid polypeptide reads, in one-letter code: MKPAKEIRVGNIIMVDSKPMIVLRSDVNGSSRTGFTYKWKMKNLLTNTPMENVFRGDDKFDVVVLDKKPVTYSYFADPLYVFMDEEYNQYEIEEENLGDALHYLKDGMECEAVFYDGKAISVELPITIARQVVYSEPAVKGNTSGNVLKEAKIENAVEAHRHTVQVPLFVSQDDVIEIDTRTNEYKRVVRN.

It belongs to the elongation factor P family.

The protein localises to the cytoplasm. It functions in the pathway protein biosynthesis; polypeptide chain elongation. Its function is as follows. Involved in peptide bond synthesis. Stimulates efficient translation and peptide-bond synthesis on native or reconstituted 70S ribosomes in vitro. Probably functions indirectly by altering the affinity of the ribosome for aminoacyl-tRNA, thus increasing their reactivity as acceptors for peptidyl transferase. The chain is Elongation factor P from Janthinobacterium sp. (strain Marseille) (Minibacterium massiliensis).